A 306-amino-acid chain; its full sequence is uncharacterized protein (306 aa).

A coiled-coil region spans residues 277–306; the sequence is TEIIQNYKIANELKKEKQQNKKKNSIELEE.

This is an uncharacterized protein from Saccharolobus islandicus (Sulfolobus islandicus).